A 268-amino-acid polypeptide reads, in one-letter code: UPF0739 protein C1orf74 homolog (268 aa).

Belongs to the UPF0739 family.

This chain is UPF0739 protein C1orf74 homolog, found in Salmo salar (Atlantic salmon).